The sequence spans 486 residues: Chromosomal replication initiator protein DnaA (486 aa).

Residues 1–79 form a domain I, interacts with DnaA modulators region; the sequence is MEKSKNIWSL…GYNNIVIVFT (79 aa). Residues 79 to 141 are domain II; it reads TNQPPKTHSN…EEEPTNFKNP (63 aa). The tract at residues 142 to 358 is domain III, AAA+ region; the sequence is FLKKRYTFEN…AAVTKLKAYI (217 aa). Positions 186, 188, 189, and 190 each coordinate ATP. The domain IV, binds dsDNA stretch occupies residues 359 to 486; the sequence is DLDNIEIDIE…TELMNKIKKN (128 aa).

This sequence belongs to the DnaA family. In terms of assembly, oligomerizes as a right-handed, spiral filament on DNA at oriC.

It localises to the cytoplasm. Plays an essential role in the initiation and regulation of chromosomal replication. ATP-DnaA binds to the origin of replication (oriC) to initiate formation of the DNA replication initiation complex once per cell cycle. Binds the DnaA box (a 9 base pair repeat at the origin) and separates the double-stranded (ds)DNA. Forms a right-handed helical filament on oriC DNA; dsDNA binds to the exterior of the filament while single-stranded (ss)DNA is stabiized in the filament's interior. The ATP-DnaA-oriC complex binds and stabilizes one strand of the AT-rich DNA unwinding element (DUE), permitting loading of DNA polymerase. After initiation quickly degrades to an ADP-DnaA complex that is not apt for DNA replication. Binds acidic phospholipids. In terms of biological role, binds to the bpuR promoter, possibly at 5'-TTTTTAAA-3'. The sequence is that of Chromosomal replication initiator protein DnaA from Borreliella burgdorferi (strain ATCC 35210 / DSM 4680 / CIP 102532 / B31) (Borrelia burgdorferi).